The sequence spans 82 residues: Small ribosomal subunit protein bS16 (82 aa).

It belongs to the bacterial ribosomal protein bS16 family.

This Shewanella sp. (strain MR-4) protein is Small ribosomal subunit protein bS16.